The primary structure comprises 236 residues: Ubiquinone biosynthesis O-methyltransferase (236 aa).

S-adenosyl-L-methionine is bound by residues arginine 39, glycine 59, aspartate 80, and methionine 124.

Belongs to the methyltransferase superfamily. UbiG/COQ3 family.

The enzyme catalyses a 3-demethylubiquinol + S-adenosyl-L-methionine = a ubiquinol + S-adenosyl-L-homocysteine + H(+). The catalysed reaction is a 3-(all-trans-polyprenyl)benzene-1,2-diol + S-adenosyl-L-methionine = a 2-methoxy-6-(all-trans-polyprenyl)phenol + S-adenosyl-L-homocysteine + H(+). It participates in cofactor biosynthesis; ubiquinone biosynthesis. O-methyltransferase that catalyzes the 2 O-methylation steps in the ubiquinone biosynthetic pathway. The polypeptide is Ubiquinone biosynthesis O-methyltransferase (Shewanella sp. (strain W3-18-1)).